The primary structure comprises 108 residues: Small ribosomal subunit protein uS10 (108 aa).

The protein belongs to the universal ribosomal protein uS10 family. In terms of assembly, part of the 30S ribosomal subunit.

Its function is as follows. Involved in the binding of tRNA to the ribosomes. The polypeptide is Small ribosomal subunit protein uS10 (Rhodopirellula baltica (strain DSM 10527 / NCIMB 13988 / SH1)).